Reading from the N-terminus, the 140-residue chain is uncharacterized protein (140 aa).

N27 carries an N-linked (GlcNAc...) asparagine glycan. Helical transmembrane passes span 45–65, 76–96, and 116–136; these read FSLYWTLIFNGAFYVTAGVYA, VWIFVMYVLYGGVQGLTTGTV, and VPLCCAVVQILFDVVLSYSMV.

Belongs to the TMEM170 family.

The protein resides in the membrane. This is an uncharacterized protein from Saccharomyces cerevisiae (strain ATCC 204508 / S288c) (Baker's yeast).